Consider the following 931-residue polypeptide: MASPGIEVELLGKGHSDLGEVAPEIKASERRTAVAIADLEWREMEGDDCEFRYGDGTNEAQDNDFPTVERSRLQEMLSLLGLETYQVQKLSLQDSLQISFDSMKNWAPQVPKDLPWNFLRKLQALNADARNTTMVLDVLPDARPVEKESQMEEEIIYWDPADDLAADIYSFSELPTPDTPVNPLDLLCALLLSSDSFLQQEIALKMALCQFALPLVLPDSENHYHTFLLWAMRGIVRTWWSQPPRGMGSFREDSVVLSRAPAFAFVRMDVSSNSKSQLLNAVLSPGHRQWDCFWHRDLNLGTNAREISDGLVEISWFFPSGREDLDIFPEPVAFLNLRGDIGSHWLQFKLLTEISSAVFILTDNISKKEYKLLYSMKESTTKYYFILSPYRGKRNTNLRFLNKLIPVLKIDHSHVLVKVSSTDSDSFVKRIRAIVGNVLRAPCRRVSVEDMAHAARKLGLKVDEDCEECQKAKDRMERITRKIKDSDAYRRDELRLQGDPWRKAAQVEKEFCQLQWAVDPPEKHRAELRRRLLELRMQQNGHDPSSGVQEFISGISSPSLSEKQYFLRWMEWGLARVAQPRLRQPPETLLTLRPKHGGTTDVGEPLWPEPLGVEHFLREMGQFYEAESCLVEAGRLPAGQRRFAHFPGLASELLLTGLPLELIDGSTLSMPVRWVTGLLKELHVRLERRSRLVVLSTVGVPGTGKSTLLNTMFGLRFATGKSCGPRGAFMQLITVAEGFSQDLGCDHILVIDSGGLIGGALTSAGDRFELEASLATLLMGLSNVTVISLAETKDIPAAILHAFLRLEKTGHMPNYQFVYQNLHDVSVPGPRPRDKRQLLDPPGDLSRAAAQMEKQGDGFRALAGLAFCDPEKQHIWHIPGLWHGAPPMAAVSLAYSEAIFELKRCLLENIRNGLSNQNKNIQQLIELVRRL.

A Phosphoserine modification is found at Ser-3. The 241-residue stretch at 689–929 (RSRLVVLSTV…NIQQLIELVR (241 aa)) folds into the VLIG-type G domain.

This sequence belongs to the TRAFAC class dynamin-like GTPase superfamily. Very large inducible GTPase (VLIG) family. As to expression, strongly expressed in hepatitis B virus-infected liver and in HCC cells. Also highly expressed in well-differentiated gastric cancer tissues and various gastric cancer cell lines.

It is found in the cytoplasm. It localises to the nucleus. Functionally, may be involved in cell cycle progression through the regulation of cyclin D1 expression. May participate in the development of hepatocellular carcinoma (HCC) by promoting hepatocellular growth and survival. May play an important role in development of gastric cancer. The polypeptide is Up-regulator of cell proliferation (URGCP) (Homo sapiens (Human)).